Reading from the N-terminus, the 414-residue chain is MRYLPEVDPEIYEAIKSEEYREEYHLELIASENFVSRAVLEAQGSVLTNKYAEGYPGKRYYGGCMYVDKVEDIARERVKTIYGAEHANVQPHSGSQANMAVYFVVLNPGDNVLGMNLAHGGHLTHGSPVNFSGKLYNFYFYGVDRDTEMINYDSVWNLAKEVKPKLIVAGASAYPRIIDFEKFAQIAEDVGAYFMVDMAHIAGLVAAGLHPSPVPYAHFVTSTTHKTLRGPRGGFILCKKEFAKEIDKAVFPGIQGGPLMHVIAAKAVAFKEAMTPEFKEYQKQIILNAKAMAEELMRLGYRLVSGGTDNHLMLVDLRDKGITGKEAEKALEEAGITVNKNAIPFDPQPPTVTSGIRIGTPALTTRGMKEDEMRYVARLIHEVLSNFKDSKVKEKVKKEVEELCKQFPIYRKEN.

(6S)-5,6,7,8-tetrahydrofolate-binding positions include Leu-117 and 121–123 (GHL). Lys-226 is subject to N6-(pyridoxal phosphate)lysine.

It belongs to the SHMT family. Homodimer. It depends on pyridoxal 5'-phosphate as a cofactor.

It is found in the cytoplasm. It carries out the reaction (6R)-5,10-methylene-5,6,7,8-tetrahydrofolate + glycine + H2O = (6S)-5,6,7,8-tetrahydrofolate + L-serine. It functions in the pathway one-carbon metabolism; tetrahydrofolate interconversion. Its pathway is amino-acid biosynthesis; glycine biosynthesis; glycine from L-serine: step 1/1. Its function is as follows. Catalyzes the reversible interconversion of serine and glycine with tetrahydrofolate (THF) serving as the one-carbon carrier. This reaction serves as the major source of one-carbon groups required for the biosynthesis of purines, thymidylate, methionine, and other important biomolecules. Also exhibits THF-independent aldolase activity toward beta-hydroxyamino acids, producing glycine and aldehydes, via a retro-aldol mechanism. The protein is Serine hydroxymethyltransferase of Dictyoglomus thermophilum (strain ATCC 35947 / DSM 3960 / H-6-12).